The primary structure comprises 185 residues: Large ribosomal subunit protein uL5 (185 aa).

The protein belongs to the universal ribosomal protein uL5 family. In terms of assembly, part of the 50S ribosomal subunit; part of the 5S rRNA/L5/L18/L25 subcomplex. Contacts the 5S rRNA and the P site tRNA. Forms a bridge to the 30S subunit in the 70S ribosome.

Its function is as follows. This is one of the proteins that bind and probably mediate the attachment of the 5S RNA into the large ribosomal subunit, where it forms part of the central protuberance. In the 70S ribosome it contacts protein S13 of the 30S subunit (bridge B1b), connecting the 2 subunits; this bridge is implicated in subunit movement. Contacts the P site tRNA; the 5S rRNA and some of its associated proteins might help stabilize positioning of ribosome-bound tRNAs. The protein is Large ribosomal subunit protein uL5 of Brucella abortus (strain S19).